A 317-amino-acid polypeptide reads, in one-letter code: MGNPVDNKFTWVIKNFCSVSPKPIYSDQFLIGGNKWHILAYSKKRDGHQFLCLDLELVDCEFLPSEWRKVVKVSFTVVNFFSKKLSRQIGLKHCFNKKERSKGGSLFHLSELTDKKSGFLVDGEVEIVAQITVLETDRRFHVSKDYNMEMQCWDGMATTLVENKELNDDDKAGLVNVKGFQVLPSQLGIVNRIFEKHPETALECCTKNQELRASYINVIFSLIKLLYKGAQEHSTHDLSDAEGALAYMKNLGFKLDWLEKKLDEVKEIKKKCERVTEMEKELHDLMNKHTNVSKLLEKEKLEIKNASAPDLSFSDVI.

Residues 6–131 (DNKFTWVIKN…DGEVEIVAQI (126 aa)) enclose the MATH domain. Residues 254 to 305 (KLDWLEKKLDEVKEIKKKCERVTEMEKELHDLMNKHTNVSKLLEKEKLEIKN) are a coiled coil.

This Arabidopsis thaliana (Mouse-ear cress) protein is MATH domain and coiled-coil domain-containing protein At3g58240.